Consider the following 544-residue polypeptide: Chaperonin GroEL 2 (544 aa).

ATP contacts are provided by residues 29 to 32 (TLGP), 86 to 90 (DGTTT), Gly-413, 479 to 481 (NAA), and Asp-495.

Belongs to the chaperonin (HSP60) family. In terms of assembly, forms a cylinder of 14 subunits composed of two heptameric rings stacked back-to-back. Interacts with the co-chaperonin GroES.

Its subcellular location is the cytoplasm. It carries out the reaction ATP + H2O + a folded polypeptide = ADP + phosphate + an unfolded polypeptide.. In terms of biological role, together with its co-chaperonin GroES, plays an essential role in assisting protein folding. The GroEL-GroES system forms a nano-cage that allows encapsulation of the non-native substrate proteins and provides a physical environment optimized to promote and accelerate protein folding. In Prochlorococcus marinus (strain MIT 9313), this protein is Chaperonin GroEL 2.